We begin with the raw amino-acid sequence, 177 residues long: uncharacterized protein (177 aa).

Positions 10 to 177 (LILRQITDQD…NVYSIVKPRE (168 aa)) constitute an N-acetyltransferase domain.

This sequence belongs to the acetyltransferase family.

This is an uncharacterized protein from Bacillus subtilis (strain 168).